The primary structure comprises 95 residues: Small ribosomal subunit protein bS18 (95 aa).

This sequence belongs to the bacterial ribosomal protein bS18 family. Part of the 30S ribosomal subunit. Forms a tight heterodimer with protein bS6.

In terms of biological role, binds as a heterodimer with protein bS6 to the central domain of the 16S rRNA, where it helps stabilize the platform of the 30S subunit. The chain is Small ribosomal subunit protein bS18 from Rickettsia peacockii (strain Rustic).